Reading from the N-terminus, the 174-residue chain is Fimbria A protein (174 aa).

The signal sequence occupies residues 1-22 (MKLNKIMLATVLAFGVSSLANA). The cysteines at positions 41 and 80 are disulfide-linked.

This sequence belongs to the fimbrial protein family.

It is found in the fimbrium. Its function is as follows. Major structural component of mannose-resistant fimbriae of Serratia marcescens. This Serratia marcescens protein is Fimbria A protein (smfA).